A 273-amino-acid chain; its full sequence is Bis(5'-nucleosyl)-tetraphosphatase, symmetrical (273 aa).

Belongs to the Ap4A hydrolase family.

It carries out the reaction P(1),P(4)-bis(5'-adenosyl) tetraphosphate + H2O = 2 ADP + 2 H(+). Hydrolyzes diadenosine 5',5'''-P1,P4-tetraphosphate to yield ADP. The polypeptide is Bis(5'-nucleosyl)-tetraphosphatase, symmetrical (Aeromonas hydrophila subsp. hydrophila (strain ATCC 7966 / DSM 30187 / BCRC 13018 / CCUG 14551 / JCM 1027 / KCTC 2358 / NCIMB 9240 / NCTC 8049)).